The primary structure comprises 338 residues: Ketol-acid reductoisomerase (NADP(+)) (338 aa).

Positions 1-181 (MQIYYDKDAD…GGGRAGIIET (181 aa)) constitute a KARI N-terminal Rossmann domain. NADP(+) contacts are provided by residues 24 to 27 (YGSQ), R47, S50, S52, and 82 to 85 (DEHQ). The active site involves H107. G133 lines the NADP(+) pocket. The region spanning 182–327 (TFREETETDL…ARLRDMMPWI (146 aa)) is the KARI C-terminal knotted domain. D190, E194, E226, and E230 together coordinate Mg(2+). Residue S251 participates in substrate binding.

This sequence belongs to the ketol-acid reductoisomerase family. It depends on Mg(2+) as a cofactor.

The catalysed reaction is (2R)-2,3-dihydroxy-3-methylbutanoate + NADP(+) = (2S)-2-acetolactate + NADPH + H(+). It catalyses the reaction (2R,3R)-2,3-dihydroxy-3-methylpentanoate + NADP(+) = (S)-2-ethyl-2-hydroxy-3-oxobutanoate + NADPH + H(+). Its pathway is amino-acid biosynthesis; L-isoleucine biosynthesis; L-isoleucine from 2-oxobutanoate: step 2/4. It participates in amino-acid biosynthesis; L-valine biosynthesis; L-valine from pyruvate: step 2/4. Involved in the biosynthesis of branched-chain amino acids (BCAA). Catalyzes an alkyl-migration followed by a ketol-acid reduction of (S)-2-acetolactate (S2AL) to yield (R)-2,3-dihydroxy-isovalerate. In the isomerase reaction, S2AL is rearranged via a Mg-dependent methyl migration to produce 3-hydroxy-3-methyl-2-ketobutyrate (HMKB). In the reductase reaction, this 2-ketoacid undergoes a metal-dependent reduction by NADPH to yield (R)-2,3-dihydroxy-isovalerate. The polypeptide is Ketol-acid reductoisomerase (NADP(+)) (Methylococcus capsulatus (strain ATCC 33009 / NCIMB 11132 / Bath)).